The following is a 34-amino-acid chain: Photosystem II reaction center protein M (34 aa).

The helical transmembrane segment at 5–25 (ILAFIATALFILVPTAFLLII) threads the bilayer.

This sequence belongs to the PsbM family. In terms of assembly, PSII is composed of 1 copy each of membrane proteins PsbA, PsbB, PsbC, PsbD, PsbE, PsbF, PsbH, PsbI, PsbJ, PsbK, PsbL, PsbM, PsbT, PsbX, PsbY, PsbZ, Psb30/Ycf12, at least 3 peripheral proteins of the oxygen-evolving complex and a large number of cofactors. It forms dimeric complexes.

The protein localises to the plastid. Its subcellular location is the chloroplast thylakoid membrane. Its function is as follows. One of the components of the core complex of photosystem II (PSII). PSII is a light-driven water:plastoquinone oxidoreductase that uses light energy to abstract electrons from H(2)O, generating O(2) and a proton gradient subsequently used for ATP formation. It consists of a core antenna complex that captures photons, and an electron transfer chain that converts photonic excitation into a charge separation. This subunit is found at the monomer-monomer interface. The protein is Photosystem II reaction center protein M of Phaseolus vulgaris (Kidney bean).